A 502-amino-acid polypeptide reads, in one-letter code: Probable cytosol aminopeptidase (502 aa).

Residues lysine 265 and aspartate 270 each coordinate Mn(2+). Residue lysine 277 is part of the active site. Mn(2+) contacts are provided by aspartate 288, aspartate 347, and glutamate 349. The active site involves arginine 351.

It belongs to the peptidase M17 family. The cofactor is Mn(2+).

It localises to the cytoplasm. The catalysed reaction is Release of an N-terminal amino acid, Xaa-|-Yaa-, in which Xaa is preferably Leu, but may be other amino acids including Pro although not Arg or Lys, and Yaa may be Pro. Amino acid amides and methyl esters are also readily hydrolyzed, but rates on arylamides are exceedingly low.. The enzyme catalyses Release of an N-terminal amino acid, preferentially leucine, but not glutamic or aspartic acids.. Its function is as follows. Presumably involved in the processing and regular turnover of intracellular proteins. Catalyzes the removal of unsubstituted N-terminal amino acids from various peptides. The polypeptide is Probable cytosol aminopeptidase (Rickettsia bellii (strain OSU 85-389)).